A 728-amino-acid chain; its full sequence is Catalase B (728 aa).

Residues His107 and Asn180 contribute to the active site. Heme is bound at residue Tyr394.

It belongs to the catalase family. Requires heme as cofactor.

It is found in the secreted. The catalysed reaction is 2 H2O2 = O2 + 2 H2O. Functionally, occurs in almost all aerobically respiring organisms and serves to protect cells from the toxic effects of hydrogen peroxide. The polypeptide is Catalase B (CATB) (Ajellomyces capsulatus (Darling's disease fungus)).